A 1002-amino-acid chain; its full sequence is yemanuclein (1002 aa).

Residues 80 to 85 (KKKTKK) carry the Nuclear localization signal motif. Disordered regions lie at residues 193–358 (AIIK…KKVV), 395–428 (VSTDVSSSDSSDMESEHGRADRQAGQHGKDGQEN), and 642–725 (KLKA…AKQV). Low complexity predominate over residues 207–217 (SSSSESSSSSS). Positions 218–262 (GDDDENDDGNNEEDDESDSEDDSEENDESDSEDDSESESLEDEDS) are enriched in acidic residues. 2 repeat units span residues 230 to 241 (EDDESDSEDDSE) and 242 to 253 (ENDESDSEDDSE). Residues 230-253 (EDDESDSEDDSEENDESDSEDDSE) are 2 X 12 AA tandem repeats. Composition is skewed to low complexity over residues 286 to 320 (TGKSKPSSSSLTSGKKPPTKPITTSSSSNSPRPST), 336 to 358 (QPSSQLQSLPQSQAQAQALKKVV), and 395 to 404 (VSTDVSSSDS). Positions 408-427 (ESEHGRADRQAGQHGKDGQE) are enriched in basic and acidic residues. Positions 653-667 (PASASPKPVGVVSAP) are enriched in low complexity. Over residues 679–689 (AVEDPRSRGNS) the composition is skewed to basic and acidic residues. 2 positions are modified to phosphoserine: Ser-685 and Ser-689. The span at 690–701 (DTDSATSASSNS) shows a compositional bias: low complexity. Ser-885, Ser-886, and Ser-887 each carry phosphoserine. The tract at residues 901–928 (SKPQKKVQSKPKNKTQNRGRSSLGAVGQ) is disordered. Residues 903-917 (PQKKVQSKPKNKTQN) are compositionally biased toward basic residues.

The N-terminus is blocked. Oocyte specific.

It is found in the nucleus. It localises to the nucleoplasm. The protein localises to the chromosome. Its subcellular location is the centromere. The protein resides in the kinetochore. May play a key role in egg organization. May be a transcriptional regulator having a role in chromatin remodeling in concert with Hira, a histone chaperone. Involved in chromosome segregation by affecting kinetochores function in the first meiotic division. The polypeptide is yemanuclein (Drosophila melanogaster (Fruit fly)).